A 576-amino-acid polypeptide reads, in one-letter code: Arginine--tRNA ligase (576 aa).

The short motif at 128-136 is the 'HIGH' region element; that stretch reads PTGPMHIGH.

Belongs to the class-I aminoacyl-tRNA synthetase family. In terms of assembly, monomer.

Its subcellular location is the cytoplasm. The enzyme catalyses tRNA(Arg) + L-arginine + ATP = L-arginyl-tRNA(Arg) + AMP + diphosphate. This chain is Arginine--tRNA ligase, found in Rickettsia conorii (strain ATCC VR-613 / Malish 7).